A 79-amino-acid polypeptide reads, in one-letter code: MPKRVLQGVVISDKSDKTVVVKVERRYSHPLLKKTVRQSKNYKAHDENNQFKIGDQVSIQESRPISKDKCWIVVKDNVA.

This sequence belongs to the universal ribosomal protein uS17 family. As to quaternary structure, part of the 30S ribosomal subunit.

Its function is as follows. One of the primary rRNA binding proteins, it binds specifically to the 5'-end of 16S ribosomal RNA. The chain is Small ribosomal subunit protein uS17 from Bartonella tribocorum (strain CIP 105476 / IBS 506).